Reading from the N-terminus, the 121-residue chain is Small ribosomal subunit protein uS13 (121 aa).

Residues 91–121 (HRKGLPVRGQRTRTNARTRKGKKKTVAGKKK) form a disordered region.

The protein belongs to the universal ribosomal protein uS13 family. As to quaternary structure, part of the 30S ribosomal subunit. Forms a loose heterodimer with protein S19. Forms two bridges to the 50S subunit in the 70S ribosome.

Functionally, located at the top of the head of the 30S subunit, it contacts several helices of the 16S rRNA. In the 70S ribosome it contacts the 23S rRNA (bridge B1a) and protein L5 of the 50S subunit (bridge B1b), connecting the 2 subunits; these bridges are implicated in subunit movement. Contacts the tRNAs in the A and P-sites. The sequence is that of Small ribosomal subunit protein uS13 from Treponema denticola (strain ATCC 35405 / DSM 14222 / CIP 103919 / JCM 8153 / KCTC 15104).